A 1035-amino-acid polypeptide reads, in one-letter code: NACHT, LRR and PYD domains-containing protein 3 (1035 aa).

In terms of domain architecture, Pyrin spans 1 to 93; the sequence is MKMASTRCKL…YEKAKRDEPK (93 aa). At Ser-5 the chain carries Phosphoserine. A disulfide bridge links Cys-8 with Cys-108. Tyr-13 carries the post-translational modification Phosphotyrosine. Residue Cys-130 is the site of S-palmitoyl cysteine attachment. Positions 131–134 are required for binding to phosphatidylinositol 4-phosphate (PtdIns4P); that stretch reads KKKK. Phosphotyrosine is present on residues Tyr-136, Tyr-140, and Tyr-143. In terms of domain architecture, FISNA spans 140-210; sequence YRKYVRSRFQ…SPIKMELLFD (71 aa). 2 positions are modified to phosphoserine: Ser-161 and Ser-163. At Tyr-168 the chain carries Phosphotyrosine. Thr-169 contributes to the ATP binding site. Phosphoserine occurs at positions 198 and 201. In terms of domain architecture, NACHT spans 220–536; that stretch reads HTVVFQGAAG…EFFAAMYYLL (317 aa). Residue 226 to 233 coordinates ATP; sequence GAAGIGKT. Ser-265 and Ser-295 each carry phosphoserine. Lys-324 participates in a covalent cross-link: Glycyl lysine isopeptide (Lys-Gly) (interchain with G-Cter in ubiquitin). Ser-334 bears the Phosphoserine mark. The KFERQ-like motif 1 signature appears at 355–359; that stretch reads LEKLQ. Lys-430 participates in a covalent cross-link: Glycyl lysine isopeptide (Lys-Gly) (interchain with G-Cter in ubiquitin). Residue His-522 coordinates ATP. A KFERQ-like motif 2 motif is present at residues 603-607; that stretch reads QIRLE. Residue Lys-689 forms a Glycyl lysine isopeptide (Lys-Gly) (interchain with G-Cter in ubiquitin) linkage. Phosphoserine is present on residues Ser-727 and Ser-734. LRR repeat units follow at residues 741 to 761, 770 to 791, 798 to 818, 827 to 848, and 855 to 875; these read SLTE…RVLC, NIRR…DISL, KLVE…RLLC, NLKK…DLAS, and SLTR…AILC. Positions 797 to 801 match the KFERQ-like motif 3 motif; it reads QKLVE. Ser-805 carries the post-translational modification Phosphoserine. 3 S-palmitoyl cysteine lipidation sites follow: Cys-836, Cys-837, and Cys-843. The residue at position 860 (Tyr-860) is a Phosphotyrosine. Residue Lys-877 forms a Glycyl lysine isopeptide (Lys-Gly) (interchain with G-Cter in ubiquitin) linkage. LRR repeat units follow at residues 884–905, 912–932, 941–962, and 969–990; these read NLQK…ALSS, NLTH…KLLC, KLQV…DLST, and SLRK…MFCE. Lys-926 participates in a covalent cross-link: Glycyl lysine isopeptide (Lys-Gly) (interchain with G-Cter in ubiquitin). Cys-957 carries S-palmitoyl cysteine lipidation. Residue Lys-972 forms a Glycyl lysine isopeptide (Lys-Gly) (interchain with G-Cter in ubiquitin) linkage. Ser-974 bears the Phosphoserine mark. The short motif at 990-994 is the KFERQ-like motif 4 element; it reads EVLKQ. Ser-1034 is subject to Phosphoserine.

Belongs to the NLRP family. Sensor component of NLRP3 inflammasomes; inflammasomes are supramolecular complexes that assemble in the cytosol in response to pathogens and other damage-associated signals and play critical roles in innate immunity and inflammation. The core of NLRP3 inflammasomes consists of a signal sensor component (NLRP3), an adapter (PYCARD/ASC), which recruits an effector pro-inflammatory caspase (CASP1 and, possibly, CASP4 and CASP5). Homodecamer; inactive NLRP3 forms homodecameric double-ring cages that hide pyrin domains within NACHT-LRR rings to avoid premature activation. Interacts (via pyrin domain) with PYCARD/ASC (via pyrin domain); interaction is direct. Interacts (via LRR repeat domain) with NEK7 (via N-terminus); the interaction is required for the formation of the complex NLRP3:PYCARD, oligomerization of PYCARD/ASC and activation of CASP1. Interacts (via LRR repeat domain) with NR4A1/Nur77 (via N-terminus); the interaction is direct, requires activation of NR4A1 by its ligands NBRE-containing dsDNA and lipopolysaccharide, and stimulates the association of NLRP3 with NEK7 for non-canonical NLRP3 inflammasome activation. Interacts with CARD8; leading to inhibit formation of the NLRP3 inflammasome. Interacts with MEFV; this interaction targets NLRP3 to degradation by autophagy, hence preventing excessive IL1B- and IL18-mediated inflammation. Interacts with EIF2AK2/PKR; this interaction requires EIF2AK2 activity, is accompanied by EIF2AK2 autophosphorylation and promotes inflammasome assembly in response to specific stimuli. Interacts with GBP5 (via DAPIN domain); this interaction promotes inflammasome assembly in response to microbial and soluble, but not crystalline, agents. Interacts with PML (isoform PML-1) (via the leucine-rich repeat (LRR) domain); PML-mediated increase in NLRP3 inflammasome activation does not depend upon this interaction. Interacts (via NACHT domain) with DHX33 (via DEAH box); NLRP3 activation in presence of cytosolic dsRNA is mediated by DHX33. Interacts (via NACHT and LRR domains) with ARRB2; this interaction is direct and inducible by polyunsaturated fatty acids (PUFAs). Interacts (via NACHT domain) with DDX3X under both LPS-primed and inflammasome-activating conditions. Interacts with IRF4 (via the LRR domain); this interaction is direct and is required for optimal IRF4 binding to IL4 promoter and efficient IL4 transactivation during differentiation of Th2 helper T-cells. Interacts with MAVS; promoting localization to mitochondria and activation of the NLRP3 inflammasome. Interacts with MARK4; promoting localization of NLRP3 to the microtubule organizing center (MTOC). Interacts with TRIM50; this interaction also promotes NLRP3 oligomerization and subsequent inflammasome activation. Interacts with IRGM; preventing NLRP3 inflammasome assembly and promoting NLRP3 degradation. Interacts (via KFERQ-like motifs) with HSPA8/HSC70; promoting NLRP3 degradation by the chaperone-mediated autophagy pathway. Interacts (via NACHT and LLR domains) with ABHD8; this interaction is enhanced in the presence of NLRP3 inflammasome inducers, such as ATP, nigericin, silica, or alum. Interaction with ABHD8 leads the recruitment of ZDHHC12, hence facilitating NLRP3 palmitoylation and degradation by the chaperone-mediated autophagy pathway (CMA), therefore attenuating NLRP3 inflammasome activation. Post-translationally, the disulfide bond in the pyrin domain might play a role in reactive oxygen species-mediated activation. In terms of processing, phosphorylation at Ser-198 by MAPK8/JNK1 increases inflammasome activation by promoting deubiquitination by BRCC3 and NLRP3 homooligomerization. Phosphorylation at Ser-805 by CSNK1A1 prevents inflammasome activation by preventing NEK7 recruitment. Phosphorylation at Ser-5 in the pyrin domain inhibits homomultimerization of NLRP3 and activation of the NLRP3 inflammasome: dephosphorylation by protein phosphatase 2A (PP2A) promotes assembly of the NLRP3 inflammasome. Phosphorylation at Ser-295 by PKD/PRKD1 promotes NLRP3 inflammasome assembly. Phosphorylation by ERK1/MAPK3 promotes NLRP3 inflammasome assembly. Phosphorylation by BTK (at Tyr-136, Tyr-140, Tyr-143 and Tyr-168) in the region that mediates binding to phosphatidylinositol phosphate, promotes relocalization of NLRP3 and assembly of the NLRP3 inflammasome. Phosphorylation at Tyr-860 inhibits NLRP3 inflammasome assembly: dephosphorylation by PTPN22 promotes inflammasome activation. Phosphorylated by LATS1 and LATS2 at Ser-265 following palmitoylation by ZDHHC1, promoting its relocalization to the microtubule organizing center (MTOC), where NLRP3 is activated by NEK7, leading to inflammasome assembly and activation. Ubiquitinated; undergoes both 'Lys-48'- and 'Lys-63'-linked polyubiquitination. Ubiquitination does not lead to degradation, but inhibits inflammasome activation. Deubiquitination is catalyzed by BRCC3 and associated with NLRP3 activation and inflammasome assembly. This process can be induced by the activation of Toll-like receptors (by LPS), through a non-transcriptional pathway dependent on the mitochondrial production of reactive oxygen species, and by ATP. Ubiquitinated by TRIM31 via 'Lys-48'-linked ubiquitination, leading to its degradation by the proteasome. Ubiquitinated at Lys-689 by the SCF(FBXL2) complex, leading to its degradation by the proteasome. Ubiquitinated by TRIM35 via 'lys-48' and 'Lys-63'-linked ubiquitination leading to inhibition of NLRP3 inflammasome activation. Undergoes 'Lys-27'-linked polyubiquitination by MARCHF5, leading to NLRP3-NEK7 complex formation and NLRP3 oligomerization. Post-translationally, palmitoylation by ZDHHC12 promotes NLRP3 degradation by the chaperone-mediated autophagy pathway (CMA) and therefore limits NLRP3 inflammasome activation. Interaction with ZDHHC12, and hence NLRP3 palmitoylation, is greatly enhanced by ABHD8. Following palmitoylation, HSPA8/HSC70 recognizes and binds the KFERQ-like motifs on NLRP3 and promotes NLRP3 recruitment to lysosomes, where it is degraded via the chaperone-mediated autophagy pathway in a LAMP2-dependent process. Palmitoylation at Cys-836 and Cys-837 by ZDHHC5 enhances its binding to NEK7 leading to inflammasome assembly and activation. Palmitoylation at Cys-130 and Cys-957 by ZDHHC1 facilitates phosphorylation at Ser-265 by LATS1 and LATS2, promoting its relocalization to the microtubule organizing center (MTOC), where NLRP3 is activated by NEK7, leading to inflammasome assembly and activation. Depalmitoylated by ABHD17A. In terms of processing, degraded via selective autophagy following interaction with IRGM. IRGM promotes NLRP3 recruitment to autophagosome membranes, promoting its SQSTM1/p62-dependent autophagy-dependent degradation. Highly expressed in oocyte, testis, spleen, thymus and kidney.

It is found in the cytoplasm. The protein resides in the cytosol. The protein localises to the inflammasome. It localises to the cytoskeleton. Its subcellular location is the microtubule organizing center. It is found in the golgi apparatus membrane. The protein resides in the endoplasmic reticulum. The protein localises to the mitochondrion. It localises to the secreted. Its subcellular location is the nucleus. The enzyme catalyses ATP + H2O = ADP + phosphate + H(+). Under resting conditions, NLRP3 binds ADP and is autoinhibited. Inactive NLRP3 forms homodecameric double-ring cages that hide pyrin domains within NACHT-LRR rings to avoid premature activation. NLRP3 activation stimuli include extracellular ATP, nigericin, reactive oxygen species, crystals of monosodium urate or cholesterol, amyloid-beta fibers, environmental or industrial particles and nanoparticles, such as asbestos, silica, aluminum salts, cytosolic dsRNA, etc. Almost all stimuli trigger intracellular K(+) efflux. These stimuli lead to membrane perturbations that induce activation of NLRP3. Upon activation, NLRP3 is transported to microtubule organizing center (MTOC), where it is unlocked by NEK7, leading to its relocalization to dispersed trans-Golgi network (dTGN) vesicle membranes and recruitment of PYCARD/ASC for the formation of an active inflammasome complex. NEK7-activated NLRP3 forms a disk-shaped inflammasome. NLRP3 and PYCARD/ASC interact via their respective pyrin domains; interaction initiates speck formation (nucleation) which greatly enhances further addition of soluble PYCARD/ASC molecules to the speck in a prion-like polymerization process. Clustered PYCARD/ASC nucleates the formation of CASP1 filaments through the interaction of their respective CARD domains, acting as a platform for CASP1 polymerization and activation. Active CASP1 then processes IL1B and IL18 precursors, leading to the release of mature cytokines in the extracellular milieu and inflammatory response. NLRP3 inflammasome assembly is inhibited by IRGM, which impedes NLRP3 oligomerization. NLRP3 inflammasome is inhibited by cyclic AMP (cAMP), which directly binds NLRP3; inhibition is relieved by calcium-sensing receptor CASR, which inhibits production of cAMP. Specifically inhibited by sulfonylurea MCC950 (also named CP-456,773, CRID3), a potent and specific small-molecule inhibitor of the NLRP3 inflammasome that acts by preventing ATP hydrolysis. In terms of biological role, sensor component of the NLRP3 inflammasome, which mediates inflammasome activation in response to defects in membrane integrity, leading to secretion of inflammatory cytokines IL1B and IL18 and pyroptosis. In response to pathogens and other damage-associated signals that affect the integrity of membranes, initiates the formation of the inflammasome polymeric complex composed of NLRP3, CASP1 and PYCARD/ASC. Recruitment of pro-caspase-1 (proCASP1) to the NLRP3 inflammasome promotes caspase-1 (CASP1) activation, which subsequently cleaves and activates inflammatory cytokines IL1B and IL18 and gasdermin-D (GSDMD), promoting cytokine secretion and pyroptosis. Activation of NLRP3 inflammasome is also required for HMGB1 secretion; stimulating inflammatory responses. Under resting conditions, ADP-bound NLRP3 is autoinhibited. NLRP3 activation stimuli include extracellular ATP, nigericin, reactive oxygen species, crystals of monosodium urate or cholesterol, amyloid-beta fibers, environmental or industrial particles and nanoparticles, such as asbestos, silica, aluminum salts, cytosolic dsRNA, etc. Almost all stimuli trigger intracellular K(+) efflux. These stimuli lead to membrane perturbation and activation of NLRP3. Upon activation, NLRP3 is transported to microtubule organizing center (MTOC), where it is unlocked by NEK7, leading to its relocalization to dispersed trans-Golgi network (dTGN) vesicle membranes and formation of an active inflammasome complex. Associates with dTGN vesicle membranes by binding to phosphatidylinositol 4-phosphate (PtdIns4P). Shows ATPase activity. Functionally, independently of inflammasome activation, regulates the differentiation of T helper 2 (Th2) cells and has a role in Th2 cell-dependent asthma and tumor growth. During Th2 differentiation, required for optimal IRF4 binding to IL4 promoter and for IRF4-dependent IL4 transcription. Binds to the consensus DNA sequence 5'-GRRGGNRGAG-3'. May also participate in the transcription of IL5, IL13, GATA3, CCR3, CCR4 and MAF. This is NACHT, LRR and PYD domains-containing protein 3 (NLRP3) from Macaca mulatta (Rhesus macaque).